A 348-amino-acid chain; its full sequence is MRIELLNTPADALETRFEEQIRPIRMLDFAGQQRLTDNLRVFISAAKMRGDALDHVLLSGPPGLGKTTLAHIIAAEMGSSIKATSGPLLDKAGNLAGLLTGLQKGDVLFIDEIHRMPPAVEEYLYSAMEDFRIDIMLDSGPSARAVQLRIEPFTLVGATTRSGLLTSPLRARFGINSRFDYYSADLLEKIIIRASGILGIGVDQDAAAEIAGRSRGTPRIANRLLRRARDFAQVADAPLITRSIAMTTLDCLEIDEEGLDDMDKKIMDTIVNKFSGGPVGAASLAVSVGEEQDTIEEVYEPYLIQAGYIARTPRGRVATRRALLRFSVQESRGDGPLFEFPLEDDQRQ.

The tract at residues methionine 1–tyrosine 182 is large ATPase domain (RuvB-L). ATP-binding positions include isoleucine 21, arginine 22, glycine 63, lysine 66, threonine 67, threonine 68, glutamate 129–phenylalanine 131, arginine 172, tyrosine 182, and arginine 219. Mg(2+) is bound at residue threonine 67. Residues serine 183–glutamate 253 form a small ATPAse domain (RuvB-S) region. Residues glutamate 256–glutamine 348 are head domain (RuvB-H). Positions 311 and 316 each coordinate DNA.

The protein belongs to the RuvB family. As to quaternary structure, homohexamer. Forms an RuvA(8)-RuvB(12)-Holliday junction (HJ) complex. HJ DNA is sandwiched between 2 RuvA tetramers; dsDNA enters through RuvA and exits via RuvB. An RuvB hexamer assembles on each DNA strand where it exits the tetramer. Each RuvB hexamer is contacted by two RuvA subunits (via domain III) on 2 adjacent RuvB subunits; this complex drives branch migration. In the full resolvosome a probable DNA-RuvA(4)-RuvB(12)-RuvC(2) complex forms which resolves the HJ.

The protein resides in the cytoplasm. The catalysed reaction is ATP + H2O = ADP + phosphate + H(+). Functionally, the RuvA-RuvB-RuvC complex processes Holliday junction (HJ) DNA during genetic recombination and DNA repair, while the RuvA-RuvB complex plays an important role in the rescue of blocked DNA replication forks via replication fork reversal (RFR). RuvA specifically binds to HJ cruciform DNA, conferring on it an open structure. The RuvB hexamer acts as an ATP-dependent pump, pulling dsDNA into and through the RuvAB complex. RuvB forms 2 homohexamers on either side of HJ DNA bound by 1 or 2 RuvA tetramers; 4 subunits per hexamer contact DNA at a time. Coordinated motions by a converter formed by DNA-disengaged RuvB subunits stimulates ATP hydrolysis and nucleotide exchange. Immobilization of the converter enables RuvB to convert the ATP-contained energy into a lever motion, pulling 2 nucleotides of DNA out of the RuvA tetramer per ATP hydrolyzed, thus driving DNA branch migration. The RuvB motors rotate together with the DNA substrate, which together with the progressing nucleotide cycle form the mechanistic basis for DNA recombination by continuous HJ branch migration. Branch migration allows RuvC to scan DNA until it finds its consensus sequence, where it cleaves and resolves cruciform DNA. The sequence is that of Holliday junction branch migration complex subunit RuvB from Chlorobium limicola (strain DSM 245 / NBRC 103803 / 6330).